Reading from the N-terminus, the 101-residue chain is Citrate lyase acyl carrier protein (101 aa).

Position 14 is an O-(phosphoribosyl dephospho-coenzyme A)serine (Ser14).

Belongs to the CitD family. In terms of assembly, oligomer with a subunit composition of (alpha,beta,gamma)6.

It localises to the cytoplasm. In terms of biological role, covalent carrier of the coenzyme of citrate lyase. This Streptococcus uberis (strain ATCC BAA-854 / 0140J) protein is Citrate lyase acyl carrier protein.